A 264-amino-acid polypeptide reads, in one-letter code: S-adenosylmethionine decarboxylase proenzyme (264 aa).

The active-site Schiff-base intermediate with substrate; via pyruvic acid is serine 112. Serine 112 carries the pyruvic acid (Ser); by autocatalysis modification. The Proton acceptor; for processing activity role is filled by histidine 117. Catalysis depends on cysteine 140, which acts as the Proton donor; for catalytic activity.

Belongs to the prokaryotic AdoMetDC family. Type 2 subfamily. In terms of assembly, heterooctamer of four alpha and four beta chains arranged as a tetramer of alpha/beta heterodimers. Pyruvate serves as cofactor. Is synthesized initially as an inactive proenzyme. Formation of the active enzyme involves a self-maturation process in which the active site pyruvoyl group is generated from an internal serine residue via an autocatalytic post-translational modification. Two non-identical subunits are generated from the proenzyme in this reaction, and the pyruvate is formed at the N-terminus of the alpha chain, which is derived from the carboxyl end of the proenzyme. The post-translation cleavage follows an unusual pathway, termed non-hydrolytic serinolysis, in which the side chain hydroxyl group of the serine supplies its oxygen atom to form the C-terminus of the beta chain, while the remainder of the serine residue undergoes an oxidative deamination to produce ammonia and the pyruvoyl group blocking the N-terminus of the alpha chain.

The catalysed reaction is S-adenosyl-L-methionine + H(+) = S-adenosyl 3-(methylsulfanyl)propylamine + CO2. It participates in amine and polyamine biosynthesis; S-adenosylmethioninamine biosynthesis; S-adenosylmethioninamine from S-adenosyl-L-methionine: step 1/1. Its function is as follows. Catalyzes the decarboxylation of S-adenosylmethionine to S-adenosylmethioninamine (dcAdoMet), the propylamine donor required for the synthesis of the polyamines spermine and spermidine from the diamine putrescine. The chain is S-adenosylmethionine decarboxylase proenzyme from Salmonella gallinarum (strain 287/91 / NCTC 13346).